A 269-amino-acid polypeptide reads, in one-letter code: Putative pyruvate, phosphate dikinase regulatory protein (269 aa).

Residue 153–160 participates in ADP binding; the sequence is GVSRTSKT.

The protein belongs to the pyruvate, phosphate/water dikinase regulatory protein family. PDRP subfamily.

The enzyme catalyses N(tele)-phospho-L-histidyl/L-threonyl-[pyruvate, phosphate dikinase] + ADP = N(tele)-phospho-L-histidyl/O-phospho-L-threonyl-[pyruvate, phosphate dikinase] + AMP + H(+). It catalyses the reaction N(tele)-phospho-L-histidyl/O-phospho-L-threonyl-[pyruvate, phosphate dikinase] + phosphate + H(+) = N(tele)-phospho-L-histidyl/L-threonyl-[pyruvate, phosphate dikinase] + diphosphate. Its function is as follows. Bifunctional serine/threonine kinase and phosphorylase involved in the regulation of the pyruvate, phosphate dikinase (PPDK) by catalyzing its phosphorylation/dephosphorylation. The chain is Putative pyruvate, phosphate dikinase regulatory protein from Pediococcus pentosaceus (strain ATCC 25745 / CCUG 21536 / LMG 10740 / 183-1w).